The sequence spans 632 residues: Pescadillo homolog (632 aa).

Residues Gly306–Val341 are disordered. The span at Asp307–Phe328 shows a compositional bias: acidic residues. Residues Arg361–Pro459 enclose the BRCT domain. Disordered regions lie at residues Gly485–Ser535, Thr565–Leu585, and Met601–Ala632. A compositionally biased stretch (acidic residues) spans Gln492–Lys516. The span at Ala521–Ala531 shows a compositional bias: low complexity. Composition is skewed to basic and acidic residues over residues Gln576 to Leu585 and Asn605 to Glu616. The stretch at Ala595–Ala632 forms a coiled coil.

Belongs to the pescadillo family. As to quaternary structure, component of the NOP7 complex, composed of ERB1, NOP7 and YTM1. The complex is held together by ERB1, which interacts with NOP7 via its N-terminal domain and with YTM1 via a high-affinity interaction between the seven-bladed beta-propeller domains of the 2 proteins. The NOP7 complex associates with the 66S pre-ribosome.

The protein localises to the nucleus. It localises to the nucleolus. The protein resides in the nucleoplasm. Component of the NOP7 complex, which is required for maturation of the 25S and 5.8S ribosomal RNAs and formation of the 60S ribosome. The polypeptide is Pescadillo homolog (Cryptococcus neoformans var. neoformans serotype D (strain B-3501A) (Filobasidiella neoformans)).